A 247-amino-acid chain; its full sequence is MREMMMNNMLNDVPTPWAMYFQDSATPNMEGMMELHNNVLFYLCVMLGFVTYMLYNVMTVYNKSAMAYKYMNHGQFMEMMWTTFPAMMLLMMAFPSFMLLYMCDEVMAPAMTIKAMGLQWYWKYEYSDFMVEKGETMEFESYMIPEDLLEDGQLRMLDVDASVVCPVDTHMRFMVTSADVIHDFCMPSLGIKIDAAPGRLNQTSALMQREGVYYGQCSELCGVMHSSMPIKIEAVPTVDFLAWIDEQ.

Over 1–38 the chain is Mitochondrial intermembrane; the sequence is MREMMMNNMLNDVPTPWAMYFQDSATPNMEGMMELHNN. A helical transmembrane segment spans residues 39 to 55; it reads VLFYLCVMLGFVTYMLY. Topologically, residues 56–86 are mitochondrial matrix; the sequence is NVMTVYNKSAMAYKYMNHGQFMEMMWTTFPA. Residues 87–103 form a helical membrane-spanning segment; it reads MMLLMMAFPSFMLLYMC. Residues 104-247 are Mitochondrial intermembrane-facing; the sequence is DEVMAPAMTI…VDFLAWIDEQ (144 aa). Residues histidine 182, cysteine 217, glutamate 219, cysteine 221, histidine 225, and methionine 228 each coordinate Cu cation. Position 219 (glutamate 219) interacts with Mg(2+).

It belongs to the cytochrome c oxidase subunit 2 family. Component of the cytochrome c oxidase (complex IV, CIV), a multisubunit enzyme composed of a catalytic core of 3 subunits and several supernumerary subunits. The complex exists as a monomer or a dimer and forms supercomplexes (SCs) in the inner mitochondrial membrane with ubiquinol-cytochrome c oxidoreductase (cytochrome b-c1 complex, complex III, CIII). Cu cation is required as a cofactor.

Its subcellular location is the mitochondrion inner membrane. The catalysed reaction is 4 Fe(II)-[cytochrome c] + O2 + 8 H(+)(in) = 4 Fe(III)-[cytochrome c] + 2 H2O + 4 H(+)(out). Functionally, component of the cytochrome c oxidase, the last enzyme in the mitochondrial electron transport chain which drives oxidative phosphorylation. The respiratory chain contains 3 multisubunit complexes succinate dehydrogenase (complex II, CII), ubiquinol-cytochrome c oxidoreductase (cytochrome b-c1 complex, complex III, CIII) and cytochrome c oxidase (complex IV, CIV), that cooperate to transfer electrons derived from NADH and succinate to molecular oxygen, creating an electrochemical gradient over the inner membrane that drives transmembrane transport and the ATP synthase. Cytochrome c oxidase is the component of the respiratory chain that catalyzes the reduction of oxygen to water. Electrons originating from reduced cytochrome c in the intermembrane space (IMS) are transferred via the dinuclear copper A center (CU(A)) of subunit 2 and heme A of subunit 1 to the active site in subunit 1, a binuclear center (BNC) formed by heme A3 and copper B (CU(B)). The BNC reduces molecular oxygen to 2 water molecules using 4 electrons from cytochrome c in the IMS and 4 protons from the mitochondrial matrix. This Eeniella nana (Yeast) protein is Cytochrome c oxidase subunit 2 (COX2).